Consider the following 465-residue polypeptide: Na(+)-translocating NADH-quinone reductase subunit A (465 aa).

It belongs to the NqrA family. Composed of six subunits; NqrA, NqrB, NqrC, NqrD, NqrE and NqrF.

It catalyses the reaction a ubiquinone + n Na(+)(in) + NADH + H(+) = a ubiquinol + n Na(+)(out) + NAD(+). Its function is as follows. NQR complex catalyzes the reduction of ubiquinone-1 to ubiquinol by two successive reactions, coupled with the transport of Na(+) ions from the cytoplasm to the periplasm. NqrA to NqrE are probably involved in the second step, the conversion of ubisemiquinone to ubiquinol. This is Na(+)-translocating NADH-quinone reductase subunit A from Chlamydia trachomatis serovar L2 (strain ATCC VR-902B / DSM 19102 / 434/Bu).